The following is a 333-amino-acid chain: Phosphoribosylformylglycinamidine cyclo-ligase (333 aa).

This sequence belongs to the AIR synthase family.

The protein localises to the cytoplasm. The enzyme catalyses 2-formamido-N(1)-(5-O-phospho-beta-D-ribosyl)acetamidine + ATP = 5-amino-1-(5-phospho-beta-D-ribosyl)imidazole + ADP + phosphate + H(+). Its pathway is purine metabolism; IMP biosynthesis via de novo pathway; 5-amino-1-(5-phospho-D-ribosyl)imidazole from N(2)-formyl-N(1)-(5-phospho-D-ribosyl)glycinamide: step 2/2. This is Phosphoribosylformylglycinamidine cyclo-ligase from Clostridium perfringens (strain 13 / Type A).